Reading from the N-terminus, the 283-residue chain is ACT domain-containing protein DS12, chloroplastic (283 aa).

A chloroplast-targeting transit peptide spans 1-56 (MAEMAVTAALRPCSGVSPAVSGTSHRRRRPAAWRALAPPPPHAGLRLSSPAVRVPR). Residues 14–78 (SGVSPAVSGT…SNTDTVPTPK (65 aa)) are disordered. A compositionally biased stretch (low complexity) spans 48–63 (SSPAVRVPRAASSAAV). ACT domains follow at residues 91–171 (IVEI…ASSQ) and 206–276 (LLVV…LRRP).

It is found in the plastid. The protein localises to the chloroplast. The polypeptide is ACT domain-containing protein DS12, chloroplastic (Oryza sativa subsp. indica (Rice)).